The following is a 2717-amino-acid chain: Naringenin synthase (2717 aa).

The segment at 13-422 (HHAVESRDKV…VGRKKELIIR (410 aa)) is adenylation (A) domain. A Carrier 1 domain is found at 531-617 (AAVEALVLAE…AVRDYLFNRL (87 aa)). An O-(pantetheine 4'-phosphoryl)serine modification is found at Ser-576. Positions 638–1066 (AEPIAIISMA…GTNAHIILEQ (429 aa)) constitute a Ketosynthase family 3 (KS3) domain. Residues Cys-810, His-945, and His-988 each act as for beta-ketoacyl synthase activity in the active site. The Malonyl-CoA:ACP transacylase (MAT) domain maps to 1204-1462 (PIFSRAFKEA…GPSAVLSPHV (259 aa)). An N-terminal hotdog fold region spans residues 1549–1688 (HGVLYRTTSI…GTLKLISLPP (140 aa)). A PKS/mFAS DH domain is found at 1549-1847 (HGVLYRTTSI…LRAVQPPVVE (299 aa)). The segment at 1561-1842 (TNDIICAGFV…ISEVMLRAVQ (282 aa)) is dehydratase (DH) domain. His-1581 functions as the Proton acceptor; for dehydratase activity in the catalytic mechanism. Positions 1703 to 1847 (NSEVDVSKAY…LRAVQPPVVE (145 aa)) are C-terminal hotdog fold. Asp-1764 functions as the Proton donor; for dehydratase activity in the catalytic mechanism. In terms of domain architecture, Ketoreductase (KR) spans 2008-2186 (GTVLITGGTG…AVSLAWGPWA (179 aa)). The Carrier 2 domain occupies 2277–2354 (SRSDTLLGLV…ALVQYLLDRI (78 aa)). Position 2313 is an O-(pantetheine 4'-phosphoryl)serine (Ser-2313). Residues 2361–2373 (EIELDQDVAEEET) show a composition bias toward acidic residues. The disordered stretch occupies residues 2361–2412 (EIELDQDVAEEETVSGTNGHQNGHQNGTQNGHSNGHANGASTNGDATDGIDP). Residues 2375 to 2396 (SGTNGHQNGHQNGTQNGHSNGH) show a composition bias toward low complexity. The interval 2497 to 2711 (SLSVYSAVAA…AIAVEIEHWA (215 aa)) is thioester reductase (TE) domain.

It in the N-terminal section; belongs to the NRP synthetase family. The cofactor is pantetheine 4'-phosphate.

In terms of biological role, PKS-NRPS hybrid synthetase that, alone, is sufficient to produce naringenin chalcone, the direct precursor of naringenin, by using p-coumaric acid (p-CA) or p-hydroxybenzoic acid (p-HBA) with the involvement of malonyl-CoA molecules. The adenylation (A) domain activates p-CA or p-HBA as adenylates, which are transferred to the thiol group of the pantetheinyl residue of the T domain, and further transferred to the adjacent PKS portion of fnsA. Besides p-CA and p-HBA, the A domain is also able to activate other substrates such as cinnamic acid and salicyclic acid. Within the PKS portion of fnsA, p-CA and p-HBA act as starter units for respectively three or four malonyl-CoA molecules for elongation by the AT and KS domains of fnsA. Afterwards, naringenin chalcone is cyclized through Claisen condensation and thereby released either spontaneously or catalyzed by the TE domain. Finally, naringenin chalcone is converted to naringenin spontaneously or by a chalcone isomerase. The sequence is that of Naringenin synthase from Pestalotiopsis fici (strain W106-1 / CGMCC3.15140).